The primary structure comprises 388 residues: Succinate--CoA ligase [ADP-forming] subunit beta (388 aa).

The 236-residue stretch at 9-244 (KQLFAEYGLP…PSQDDPREAH (236 aa)) folds into the ATP-grasp domain. Residues Lys-46, 53–55 (GRG), Glu-99, Thr-102, and Glu-107 contribute to the ATP site. Residues Asn-199 and Asp-213 each contribute to the Mg(2+) site. Residues Asn-264 and 321 to 323 (GIV) contribute to the substrate site.

Belongs to the succinate/malate CoA ligase beta subunit family. In terms of assembly, heterotetramer of two alpha and two beta subunits. It depends on Mg(2+) as a cofactor.

It catalyses the reaction succinate + ATP + CoA = succinyl-CoA + ADP + phosphate. It carries out the reaction GTP + succinate + CoA = succinyl-CoA + GDP + phosphate. It participates in carbohydrate metabolism; tricarboxylic acid cycle; succinate from succinyl-CoA (ligase route): step 1/1. Succinyl-CoA synthetase functions in the citric acid cycle (TCA), coupling the hydrolysis of succinyl-CoA to the synthesis of either ATP or GTP and thus represents the only step of substrate-level phosphorylation in the TCA. The beta subunit provides nucleotide specificity of the enzyme and binds the substrate succinate, while the binding sites for coenzyme A and phosphate are found in the alpha subunit. The sequence is that of Succinate--CoA ligase [ADP-forming] subunit beta from Pseudomonas fluorescens (strain Pf0-1).